Here is a 37-residue protein sequence, read N- to C-terminus: Photosystem I reaction center subunit VIII (37 aa).

The chain crosses the membrane as a helical span at residues 7-27; that stretch reads LPSIFVPLVGLVFPAIAMASL.

The protein belongs to the PsaI family.

The protein localises to the plastid. It localises to the chloroplast thylakoid membrane. May help in the organization of the PsaL subunit. The polypeptide is Photosystem I reaction center subunit VIII (Populus alba (White poplar)).